A 333-amino-acid polypeptide reads, in one-letter code: DNA-directed RNA polymerase subunit alpha (333 aa).

The interval 1-251 (MEKLTKIKHR…AHFQTIGDLT (251 aa)) is alpha N-terminal domain (alpha-NTD). Residues 272–333 (DMEIRLLNLS…KLNEYGKLKN (62 aa)) form an alpha C-terminal domain (alpha-CTD) region.

Belongs to the RNA polymerase alpha chain family. As to quaternary structure, homodimer. The RNAP catalytic core consists of 2 alpha, 1 beta, 1 beta' and 1 omega subunit. When a sigma factor is associated with the core the holoenzyme is formed, which can initiate transcription.

It catalyses the reaction RNA(n) + a ribonucleoside 5'-triphosphate = RNA(n+1) + diphosphate. Functionally, DNA-dependent RNA polymerase catalyzes the transcription of DNA into RNA using the four ribonucleoside triphosphates as substrates. This Mycoplasmopsis synoviae (strain 53) (Mycoplasma synoviae) protein is DNA-directed RNA polymerase subunit alpha.